A 431-amino-acid chain; its full sequence is Enolase (431 aa).

Gln167 contributes to the (2R)-2-phosphoglycerate binding site. The active-site Proton donor is the Glu209. Residues Asp246, Glu289, and Asp316 each contribute to the Mg(2+) site. (2R)-2-phosphoglycerate-binding residues include Lys341, Arg370, Ser371, and Lys392. Lys341 functions as the Proton acceptor in the catalytic mechanism.

This sequence belongs to the enolase family. In terms of assembly, component of the RNA degradosome, a multiprotein complex involved in RNA processing and mRNA degradation. It depends on Mg(2+) as a cofactor.

The protein localises to the cytoplasm. It is found in the secreted. The protein resides in the cell surface. It carries out the reaction (2R)-2-phosphoglycerate = phosphoenolpyruvate + H2O. It functions in the pathway carbohydrate degradation; glycolysis; pyruvate from D-glyceraldehyde 3-phosphate: step 4/5. Functionally, catalyzes the reversible conversion of 2-phosphoglycerate (2-PG) into phosphoenolpyruvate (PEP). It is essential for the degradation of carbohydrates via glycolysis. The protein is Enolase of Chromohalobacter salexigens (strain ATCC BAA-138 / DSM 3043 / CIP 106854 / NCIMB 13768 / 1H11).